The chain runs to 303 residues: Peroxisomal trans-2-enoyl-CoA reductase (303 aa).

23-47 (VTGGATGIGKAIVKELLELGSNVVI) is a binding site for NADP(+). Lys32 is modified (N6-succinyllysine). Ser49 bears the Phosphoserine mark. The Proton acceptor role is filled by Tyr179. Tyr179 bears the Phosphotyrosine mark. Positions 301 to 303 (AKL) match the Microbody targeting signal motif.

It belongs to the short-chain dehydrogenases/reductases (SDR) family. In terms of assembly, interacts with PEX5, probably required to target it into peroxisomes.

It is found in the peroxisome. The enzyme catalyses a (2E)-enoyl-CoA + NADPH + H(+) = a 2,3-saturated acyl-CoA + NADP(+). It carries out the reaction (2E)-decenoyl-CoA + NADPH + H(+) = decanoyl-CoA + NADP(+). It catalyses the reaction (2E)-hexenoyl-CoA + NADPH + H(+) = hexanoyl-CoA + NADP(+). The catalysed reaction is (2E)-octenoyl-CoA + NADPH + H(+) = octanoyl-CoA + NADP(+). The enzyme catalyses (2E)-dodecenoyl-CoA + NADPH + H(+) = dodecanoyl-CoA + NADP(+). It carries out the reaction (2E)-tetradecenoyl-CoA + NADPH + H(+) = tetradecanoyl-CoA + NADP(+). It participates in lipid metabolism; fatty acid biosynthesis. Functionally, participates in chain elongation of fatty acids. Catalyzes the reduction of trans-2-enoyl-CoAs of varying chain lengths from 6:1 to 16:1, having maximum activity with 10:1 CoA. Has no 2,4-dienoyl-CoA reductase activity. The polypeptide is Peroxisomal trans-2-enoyl-CoA reductase (Homo sapiens (Human)).